A 110-amino-acid polypeptide reads, in one-letter code: Putative caspase recruitment domain-containing protein 17P (110 aa).

The region spanning 1 to 91 is the CARD domain; sequence MADKVLKEKR…HLAGTLGLSA (91 aa).

As to quaternary structure, interacts with pro-CASP1. As to expression, ubiquitous.

The protein localises to the cytoplasm. In terms of biological role, regulator of procaspase-1/CASP1 activation implicated in the regulation of the proteolytic maturation of pro-IL-1beta/IL1B and its release during inflammation. Inhibits the release of IL1B in response to LPS in monocytes. However, unlike CASP1, do not induce NF-kappa-B activation. This chain is Putative caspase recruitment domain-containing protein 17P (CARD17P), found in Homo sapiens (Human).